We begin with the raw amino-acid sequence, 848 residues long: Transforming growth factor beta receptor type 3 (848 aa).

An N-terminal signal peptide occupies residues 1–20; that stretch reads MTLHCVVALFALISSCLATA. Topologically, residues 21–784 are extracellular; sequence GPEPGVQCAL…IFHGLDTLTV (764 aa). N-linked (GlcNAc...) asparagine glycans are attached at residues N34 and N141. Cysteines 52 and 197 form a disulfide. The disordered stretch occupies residues 390–448; it reads SGEGAARHGGLPFPFPYIPRRGRQDGGKDRLPRPKDPVVPSIQLLPGPREPQEAQGSRD. The segment covering 411 to 425 has biased composition (basic and acidic residues); that stretch reads GRQDGGKDRLPRPKD. The ZP domain occupies 454-729; sequence RCDSEKMLVA…PKCVLPDEAC (276 aa). N-linked (GlcNAc...) asparagine glycosylation occurs at N491. S529, S533, and S544 each carry an O-linked (Xyl...) (glycosaminoglycan) serine glycan. N-linked (GlcNAc...) asparagine glycosylation is found at N570, N589, and N696. 3 cysteine pairs are disulfide-bonded: C638–C704, C659–C729, and C709–C722. The interval 736–750 is interaction with TGF-beta ligand; sequence MIWAMMQNKKTFTKP. A helical transmembrane segment spans residues 785-806; it reads MGIAFAAFVIGALLTGALWYIY. The Cytoplasmic portion of the chain corresponds to 807–848; that stretch reads SHTGDSAGRQPVPTSPPASENSSAAHSLGSTQSTPCSSSSAA. The tract at residues 813–848 is disordered; it reads AGRQPVPTSPPASENSSAAHSLGSTQSTPCSSSSAA. Residues 833-848 show a composition bias toward low complexity; the sequence is SLGSTQSTPCSSSSAA. T837 carries the phosphothreonine modification.

Forms homodimers and homooligomers. Interacts with DYNLT4. Interacts with integrin ITGA5:ITGB1; this interaction promotes the internalization and trafficking of ITGA5:ITGB1 into endocytic vesicles. Interacts with TGFB1, BMP2, BMP5, BMP7 or GDF5 and inhibin A via the ligand binding domains. Interacts with ALK3/BMPR1A; this interaction results in the cell surface retention of BMPR1A. Interacts with ALK6/BMPR1B; this interaction enhances BMPR1B-mediated stimulation of the BMP signaling pathway. Interacts with the scaffolding protein beta-arrestin2/ARRB2; this interaction mediates internalization of TGFBR3 and thus regulates migration, actin cytoskeleton and activation of CDC42. In terms of processing, extensively modified by glycosaminoglycan groups (GAG). Post-translationally, phosphorylated in the cytoplasmic domain by the type II receptor TGFBR2 at THR-837 to mediate recruitment of ARRB2 and subsequent internalization of TGFBR2 and TGFBR3.

Its subcellular location is the cell membrane. It localises to the secreted. It is found in the extracellular space. The protein resides in the extracellular matrix. In terms of biological role, cell surface receptor that regulates diverse cellular processes including cell proliferation, differentiation, migration, and apoptosis. Initiates BMP, inhibin, and TGF-beta signaling pathways by interacting with different ligands including TGFB1, BMP2, BMP5, BMP7 or GDF5. Alternatively, acts as a cell surface coreceptor for BMP ligands, serving to enhance ligand binding by differentially regulating BMPR1A/ALK3 and BMPR1B/ALK6 receptor trafficking. Promotes epithelial cell adhesion, focal adhesion formation and integrin signaling during epithelial cell spreading on fibronectin. By interacting with the scaffolding protein beta-arrestin2/ARRB2, regulates migration or actin cytoskeleton and promotes the activation of CDC42 as well as the inhibition of NF-kappa-B. In gonadotrope cells, acts as an inhibin A coreceptor and regulates follicle-stimulating hormone (FSH) levels and female fertility. Plays a role in the inhibition of directed and random cell migration in epithelial cells by altering the actin cytoskeletal organization. Participates in epithelial-mesenchymal transformation (EMT) upon binding to BMP2 or TGFB2, by activating the PAR6/SMURF1/RHOA pathway. This chain is Transforming growth factor beta receptor type 3 (TGFBR3), found in Sus scrofa (Pig).